We begin with the raw amino-acid sequence, 764 residues long: Plasma membrane fusion protein prm-1 (764 aa).

The Extracellular segment spans residues 1–61; the sequence is MVYNEKNGGG…YLGLRARLSQ (61 aa). A helical transmembrane segment spans residues 62–82; the sequence is LWFNRWTILLILVLIRVIILT. Over 83 to 149 the chain is Cytoplasmic; sequence ANLKENLGDA…LKMILTGVQA (67 aa). The helical transmembrane segment at 150 to 170 threads the bilayer; sequence IIMFVINMYIGTFACLVAAFI. Topologically, residues 171 to 334 are extracellular; it reads HGGLHVATAV…SLITLVYKAK (164 aa). N-linked (GlcNAc...) asparagine glycans are attached at residues asparagine 271 and asparagine 315. Residues 335 to 355 form a helical membrane-spanning segment; that stretch reads IAFLVVIIILALLAIFVMGYI. Topologically, residues 356–424 are cytoplasmic; that stretch reads EYRGFKRERE…AFAYATSLPA (69 aa). The helical transmembrane segment at 425-445 threads the bilayer; the sequence is LFVLSLAVAGMLSCLFQWVLL. Topologically, residues 446–624 are extracellular; it reads RQIEKKAPEL…NGVIQEALIT (179 aa). N-linked (GlcNAc...) asparagine glycans are attached at residues asparagine 479, asparagine 508, and asparagine 527. The chain crosses the membrane as a helical span at residues 625–645; the sequence is LGLFLTYVIVVLIGVMGALIG. Residues 646 to 764 are Cytoplasmic-facing; it reads WATPGKTRGE…EKVPGYFTPI (119 aa). 2 disordered regions span residues 653-701 and 735-754; these read RGEG…GGGG and HQRTSSYPTVESPDPMPHGD.

It belongs to the PRM1 family.

Its subcellular location is the cell membrane. Its function is as follows. Involved in cell fusion during mating by stabilizing the plasma membrane fusion event. The sequence is that of Plasma membrane fusion protein prm-1 (prm-1) from Neurospora crassa (strain ATCC 24698 / 74-OR23-1A / CBS 708.71 / DSM 1257 / FGSC 987).